The primary structure comprises 556 residues: Vacuolar protein 8 (556 aa).

Glycine 2 is lipidated: N-myristoyl glycine. Residues cysteine 4, cysteine 5, and cysteine 7 are each lipidated (S-palmitoyl cysteine). ARM repeat units lie at residues 38–74, 75–115, 117–156, 158–197, 199–238, 242–281, 283–322, 324–364, and 408–447; these read NRSEVDFFTDGPLRALSTLVYSENIDLQRSAALAFAE, VTEK…NLAV, DSNKVLIVNMGGLEPLIRQMMSPNIEVQCNAVGCITNLAT, DQNKSKIATSGALIPLTKLAKSKDLRVQRNATGALLNMTH, LENRQELVNAGSVPILVQLLSSTDPDVQYYCTTALSNIAV, NRKKLASTEPKLISQLVQLMDSTSPRVQCQATLALRNLAS, ANYQLEIVRAGGLPNLVTLLNSTHQPLVLAAVACIRNISI, PLNE…NLAA, and DDLKMKLLDSNIIEVLLPLTSSENGEVCGNAAAALANLCS.

The protein belongs to the beta-catenin family.

It localises to the vacuole membrane. Functionally, functions in both vacuole inheritance and protein targeting from the cytoplasm to vacuole. This Komagataella pastoris (Yeast) protein is Vacuolar protein 8 (VAC8).